A 420-amino-acid polypeptide reads, in one-letter code: Gamma-glutamyl phosphate reductase (420 aa).

This sequence belongs to the gamma-glutamyl phosphate reductase family.

The protein localises to the cytoplasm. It carries out the reaction L-glutamate 5-semialdehyde + phosphate + NADP(+) = L-glutamyl 5-phosphate + NADPH + H(+). It participates in amino-acid biosynthesis; L-proline biosynthesis; L-glutamate 5-semialdehyde from L-glutamate: step 2/2. Its function is as follows. Catalyzes the NADPH-dependent reduction of L-glutamate 5-phosphate into L-glutamate 5-semialdehyde and phosphate. The product spontaneously undergoes cyclization to form 1-pyrroline-5-carboxylate. This is Gamma-glutamyl phosphate reductase from Streptococcus pneumoniae serotype 19F (strain G54).